Here is a 787-residue protein sequence, read N- to C-terminus: GPI ethanolamine phosphate transferase 2 (787 aa).

Residues asparagine 33, asparagine 185, and asparagine 397 are each glycosylated (N-linked (GlcNAc...) asparagine). 3 helical membrane-spanning segments follow: residues 400 to 420, 426 to 446, and 455 to 475; these read FLTYGTTLMIIGTLIVTVWNF, YIEHVGTSVLLGISMFASSFI, and WITISVLLLMQISNGKKLVVL. A glycan (N-linked (GlcNAc...) asparagine) is linked at asparagine 485. Helical transmembrane passes span 504 to 524 and 536 to 556; these read HTSVLWWLNVVTFLSVGFPFL and LLSVSFLALSSITYKICFAIV. Residue asparagine 581 is glycosylated (N-linked (GlcNAc...) asparagine). Residues 591–611 traverse the membrane as a helical segment; it reads LVPIARIFFQICGVSIIILLF. N-linked (GlcNAc...) asparagine glycosylation occurs at asparagine 617. Residues 629 to 651 form a helical membrane-spanning segment; it reads VIKFVLLLQTSSANIPLFLIFEI. Residue asparagine 669 is glycosylated (N-linked (GlcNAc...) asparagine). 4 consecutive transmembrane segments (helical) span residues 671–693, 699–719, 740–760, and 767–787; these read TFFQFGGTNSIATVNLTNAYNGV, IYVVGVLMFLSNYAPSIYWAL, GTCLMIACIALRYHLFIWSVF, and YAAWSLYNVVMDFAITLLGVL.

The protein belongs to the PIGG/PIGN/PIGO family. PIGG subfamily.

It localises to the endoplasmic reticulum membrane. The protein operates within glycolipid biosynthesis; glycosylphosphatidylinositol-anchor biosynthesis. Functionally, ethanolamine phosphate transferase involved in glycosylphosphatidylinositol-anchor biosynthesis. Transfers ethanolamine phosphate to the GPI second mannose. The sequence is that of GPI ethanolamine phosphate transferase 2 (LAS21) from Kluyveromyces lactis (strain ATCC 8585 / CBS 2359 / DSM 70799 / NBRC 1267 / NRRL Y-1140 / WM37) (Yeast).